The primary structure comprises 296 residues: Ribonuclease HIII (296 aa).

An RNase H type-2 domain is found at 80–296 (LALIGSDEVG…NTKKAYQRLK (217 aa)). A divalent metal cation is bound by residues Asp86, Glu87, and Asp191.

The protein belongs to the RNase HII family. RnhC subfamily. Requires Mn(2+) as cofactor. Mg(2+) is required as a cofactor.

Its subcellular location is the cytoplasm. The enzyme catalyses Endonucleolytic cleavage to 5'-phosphomonoester.. Endonuclease that specifically degrades the RNA of RNA-DNA hybrids. In Streptococcus thermophilus (strain CNRZ 1066), this protein is Ribonuclease HIII.